The following is a 399-amino-acid chain: Glutamine synthetase 1, mitochondrial (399 aa).

The N-terminal 27 residues, 1–27 (MALRVAGLFLKKELVAPATQQLRLLRT), are a transit peptide targeting the mitochondrion. The region spanning 62–143 (VQATYLWIDG…VLCDTYSADG (82 aa)) is the GS beta-grasp domain. The 250-residue stretch at 150 to 399 (KRAAFQAAID…AIVRTCLLNE (250 aa)) folds into the GS catalytic domain.

It belongs to the glutamine synthetase family. As to quaternary structure, homooctamer.

Its subcellular location is the mitochondrion. The enzyme catalyses L-glutamate + NH4(+) + ATP = L-glutamine + ADP + phosphate + H(+). This is Glutamine synthetase 1, mitochondrial (Gs1) from Drosophila melanogaster (Fruit fly).